The sequence spans 449 residues: Nucleoprotein (449 aa).

The segment at 1–55 (MSFTPGKQSSSRASSGNRSGNGILKWADQSDQSRNVQTRGRRVQSKQTATSQQPS) is disordered. The span at 9–22 (SSSRASSGNRSGNG) shows a compositional bias: low complexity. Polar residues-rich tracts occupy residues 29-38 (QSDQSRNVQT) and 45-55 (SKQTATSQQPS). The RNA-binding stretch occupies residues 52-194 (QQPSGGTVVP…GYYIEGSGRS (143 aa)). A CoV N NTD domain is found at 61–190 (PYYSWFSGIT…VLPQGYYIEG (130 aa)). Residues arginine 106, arginine 122, and arginine 164 each contribute to the RNA site. Disordered regions lie at residues 158-231 (PADI…VTPD), 266-297 (ILNK…NFGG), and 387-449 (MMNI…TSEI). Residue serine 167 is modified to Phosphoserine; by host. Threonine 174 carries the phosphothreonine; by host modification. Serine 191 carries the phosphoserine; by host modification. 2 stretches are compositionally biased toward polar residues: residues 194 to 204 (SAPNSRSTSRA) and 212 to 227 (GSRS…STPG). The CoV N CTD domain occupies 259–384 (AKEVRQKILN…QNLNAYQHQE (126 aa)). The span at 266–276 (ILNKPRQKRSP) shows a compositional bias: basic residues. Residues 266-385 (ILNKPRQKRS…NLNAYQHQED (120 aa)) form a dimerization region. Phosphoserine; by host is present on serine 391. Residues 400-410 (QKNGQVENDNI) show a composition bias toward polar residues. Over residues 423-440 (KSRELTAEDISLLKKMDE) the composition is skewed to basic and acidic residues. A Phosphoserine; by host modification is found at serine 424. A Phosphothreonine; by host modification is found at threonine 428.

This sequence belongs to the betacoronavirus nucleocapsid protein family. Homooligomer. Both monomeric and oligomeric forms interact with RNA. Interacts with protein M. Interacts with NSP3; this interaction serves to tether the genome to the newly translated replicase-transcriptase complex at a very early stage of infection. Post-translationally, ADP-ribosylated. The ADP-ribosylation is retained in the virion during infection. Phosphorylated on serine and threonine residues.

It localises to the virion. Its subcellular location is the host endoplasmic reticulum-Golgi intermediate compartment. The protein resides in the host Golgi apparatus. Packages the positive strand viral genome RNA into a helical ribonucleocapsid (RNP) and plays a fundamental role during virion assembly through its interactions with the viral genome and membrane protein M. Plays an important role in enhancing the efficiency of subgenomic viral RNA transcription as well as viral replication. This is Nucleoprotein from Sus scrofa (Pig).